A 268-amino-acid polypeptide reads, in one-letter code: Zwei Ig domain protein zig-8 (268 aa).

The first 21 residues, 1–21, serve as a signal peptide directing secretion; sequence MRRFSNICVILFSFLYATGHG. Ig-like C2-type domains follow at residues 40-128 and 140-251; these read PSQT…NTVY and PSPS…NSAT. Cys-57 and Cys-118 are joined by a disulfide. Residues Asn-82, Asn-155, Asn-164, and Asn-191 are each glycosylated (N-linked (GlcNAc...) asparagine). Cys-165 and Cys-226 are joined by a disulfide.

As to expression, expressed in PVT neurons and pharyngeal muscles.

The protein localises to the secreted. In terms of biological role, together with zig-5, required postembryonically to maintain the position of ASI and ASH head neuron cell bodies and ventral nerve cord axons of PVQ, PVP and HSN neurons by preventing their displacement that could occur during body growth and movement. May act by reducing L1CAM-like protein sax-7 (long isoform) adhesion. The sequence is that of Zwei Ig domain protein zig-8 from Caenorhabditis elegans.